Reading from the N-terminus, the 157-residue chain is Ribosome maturation factor RimP (157 aa).

Belongs to the RimP family.

The protein resides in the cytoplasm. Required for maturation of 30S ribosomal subunits. This is Ribosome maturation factor RimP from Limosilactobacillus reuteri (strain DSM 20016) (Lactobacillus reuteri).